We begin with the raw amino-acid sequence, 186 residues long: Agglutinin isolectin 3 (186 aa).

Residue Gln1 is modified to Pyrrolidone carboxylic acid. 4 consecutive Chitin-binding type-1 domains span residues 1–42, 43–85, 86–128, and 129–171; these read QRCG…ACWT, SKRC…PCRA, DIKC…ACST, and DKPC…GCDG. Cystine bridges form between Cys3-Cys18, Cys12-Cys24, Cys17-Cys31, Cys35-Cys40, Cys46-Cys61, Cys55-Cys67, Cys60-Cys74, Cys78-Cys83, Cys89-Cys104, Cys98-Cys110, Cys103-Cys117, Cys121-Cys126, Cys132-Cys147, Cys141-Cys153, Cys146-Cys160, and Cys164-Cys169. 10–12 contributes to the substrate binding site; the sequence is MEC. 62–73 serves as a coordination point for substrate; it reads SQYGHCGFGAEY. 114–115 contributes to the substrate binding site; that stretch reads SE. Positions 172 to 186 are excised as a propeptide; that stretch reads VFAEAIATNSTLLAE. N-linked (GlcNAc...) asparagine glycosylation occurs at Asn180.

In terms of assembly, homodimer, u-shaped.

N-acetyl-D-glucosamine / N-acetyl-D-neuraminic acid binding lectin. This chain is Agglutinin isolectin 3, found in Triticum aestivum (Wheat).